The primary structure comprises 145 residues: Hemoglobin subunit beta (145 aa).

The Globin domain maps to 1 to 145 (MLTAEEKAAV…VANALAHRYH (145 aa)). T11 carries the post-translational modification Phosphothreonine. K58 is modified (N6-acetyllysine). H62 serves as a coordination point for heme b. Position 81 is an N6-acetyllysine (K81). H91 lines the heme b pocket. C92 bears the S-nitrosocysteine mark.

The protein belongs to the globin family. In terms of assembly, heterotetramer of two alpha chains and two beta chains. Red blood cells.

In terms of biological role, involved in oxygen transport from the lung to the various peripheral tissues. In Ovis aries musimon (Mouflon), this protein is Hemoglobin subunit beta (HBB).